Consider the following 782-residue polypeptide: Chaoptin (782 aa).

LRR repeat units lie at residues 16-37 (SLLTLKLTHALSSSVQNFPSDA), 43-64 (RLEELDLSNNRLRNVPDNSFHF), 67-88 (SLKKVHLQDNTIEMIHRGTFQG), 93-114 (DLTEVYFSFNSVRNVQQHTFAD), 117-138 (QLEQIHLDDNRIESLERRAFMN), 141-162 (SLKRLNLKGNKIATIAYETFQN), 165-186 (ELEDLDLAYNSISSLDFNIFDQ), 191-212 (GMFHVNMSHNKLINLVVAPSVP), 224-245 (NIKVLDLSFNNITSVAKQFFRP), 249-270 (SLMQLYLGHNKLLNATKDLFGN), 273-294 (HLQVLDLSHNSLYELDFDTFRN), 297-318 (KLQWLDTSHNRISEIPNDLFRF), 321-342 (NLRIVDFSHNRLRSLPDNLFRE), 344-364 (GLERLDVSHNLLGKLPLTSLS), 370-391 (TLSELDLSWNSISSLSHGGQLA), 395-416 (CLSWLDLSYNRLGQIDAGTFKG), 419-442 (RLASLNLGHNSQLTLEINGLSFQG), 446-467 (TLLHLNLDNVSLSQVPALSTPN), 468-488 (LLSLSLAFNSLPTVALEVAGN), 491-512 (SLRYLNLDYNDLSAVPIVTHSL), 514-535 (ELRHLSLEGNPITTLSNTSLLG), and 539-560 (QLEELNLKNIDLTVLESGAFCK). Residues asparagine 196, asparagine 234, and asparagine 262 are each glycosylated (N-linked (GlcNAc...) asparagine). 2 N-linked (GlcNAc...) asparagine glycosylation sites follow: asparagine 454 and asparagine 488. The N-linked (GlcNAc...) asparagine glycan is linked to asparagine 530. Residues asparagine 618, asparagine 648, and asparagine 667 are each glycosylated (N-linked (GlcNAc...) asparagine).

Belongs to the chaoptin family.

It localises to the cell membrane. In terms of biological role, required for photoreceptor cell morphogenesis. Mediates homophilic cellular adhesion. This Tribolium castaneum (Red flour beetle) protein is Chaoptin (CHP).